A 124-amino-acid polypeptide reads, in one-letter code: Small ribosomal subunit protein uS11 (124 aa).

The protein belongs to the universal ribosomal protein uS11 family. In terms of assembly, part of the 30S ribosomal subunit. Interacts with proteins S7 and S18. Binds to IF-3.

Located on the platform of the 30S subunit, it bridges several disparate RNA helices of the 16S rRNA. Forms part of the Shine-Dalgarno cleft in the 70S ribosome. The sequence is that of Small ribosomal subunit protein uS11 from Anaplasma phagocytophilum (strain HZ).